A 124-amino-acid polypeptide reads, in one-letter code: Small ribosomal subunit protein uS12 (124 aa).

A 3-methylthioaspartic acid modification is found at Asp89.

It belongs to the universal ribosomal protein uS12 family. In terms of assembly, part of the 30S ribosomal subunit. Contacts proteins S8 and S17. May interact with IF1 in the 30S initiation complex.

Functionally, with S4 and S5 plays an important role in translational accuracy. In terms of biological role, interacts with and stabilizes bases of the 16S rRNA that are involved in tRNA selection in the A site and with the mRNA backbone. Located at the interface of the 30S and 50S subunits, it traverses the body of the 30S subunit contacting proteins on the other side and probably holding the rRNA structure together. The combined cluster of proteins S8, S12 and S17 appears to hold together the shoulder and platform of the 30S subunit. The chain is Small ribosomal subunit protein uS12 from Yersinia pestis (strain Pestoides F).